Reading from the N-terminus, the 214-residue chain is tRNA (guanine-N(7)-)-methyltransferase (214 aa).

4 residues coordinate S-adenosyl-L-methionine: Glu44, Glu69, Asp96, and Asp118. Asp118 is a catalytic residue. Substrate is bound at residue Lys122. The interval 124 to 129 (RHEKRR) is interaction with RNA. Substrate-binding positions include Asp154 and 192 to 195 (TEYE).

Belongs to the class I-like SAM-binding methyltransferase superfamily. TrmB family.

It carries out the reaction guanosine(46) in tRNA + S-adenosyl-L-methionine = N(7)-methylguanosine(46) in tRNA + S-adenosyl-L-homocysteine. Its pathway is tRNA modification; N(7)-methylguanine-tRNA biosynthesis. Catalyzes the formation of N(7)-methylguanine at position 46 (m7G46) in tRNA. In Lacticaseibacillus casei (strain BL23) (Lactobacillus casei), this protein is tRNA (guanine-N(7)-)-methyltransferase.